The following is a 380-amino-acid chain: Beta sliding clamp (380 aa).

Belongs to the beta sliding clamp family. Forms a ring-shaped head-to-tail homodimer around DNA which binds and tethers DNA polymerases and other proteins to the DNA. The DNA replisome complex has a single clamp-loading complex (3 tau and 1 each of delta, delta', psi and chi subunits) which binds 3 Pol III cores (1 core on the leading strand and 2 on the lagging strand) each with a beta sliding clamp dimer. Additional proteins in the replisome are other copies of gamma, psi and chi, Ssb, DNA helicase and RNA primase.

The protein resides in the cytoplasm. Confers DNA tethering and processivity to DNA polymerases and other proteins. Acts as a clamp, forming a ring around DNA (a reaction catalyzed by the clamp-loading complex) which diffuses in an ATP-independent manner freely and bidirectionally along dsDNA. Initially characterized for its ability to contact the catalytic subunit of DNA polymerase III (Pol III), a complex, multichain enzyme responsible for most of the replicative synthesis in bacteria; Pol III exhibits 3'-5' exonuclease proofreading activity. The beta chain is required for initiation of replication as well as for processivity of DNA replication. This is Beta sliding clamp (dnaN) from Mycoplasma genitalium (strain ATCC 33530 / DSM 19775 / NCTC 10195 / G37) (Mycoplasmoides genitalium).